The primary structure comprises 197 residues: Small ribosomal subunit protein uS4c (197 aa).

Residues 84–143 (MRLDNIIFQLGMASTIPAARQLVCHRHILVNHRVVDIPSYRCKPRDIISIRNRPTSANAL) form the S4 RNA-binding domain.

The protein belongs to the universal ribosomal protein uS4 family. As to quaternary structure, part of the 30S ribosomal subunit. Contacts protein S5. The interaction surface between S4 and S5 is involved in control of translational fidelity.

It localises to the plastid. Its subcellular location is the chloroplast. In terms of biological role, one of the primary rRNA binding proteins, it binds directly to 16S rRNA where it nucleates assembly of the body of the 30S subunit. Its function is as follows. With S5 and S12 plays an important role in translational accuracy. The sequence is that of Small ribosomal subunit protein uS4c (rps4) from Adiantum capillus-veneris (Maidenhair fern).